A 675-amino-acid polypeptide reads, in one-letter code: MADRLPTSTSSGRRRRDGDASIGEFVIGGEIGKGSFAQVYSGHHKNSKAAVAIKSVEMGRLNNKLRENLYGEIQILKTLRHPHIVALHDCVESATHINLVMEYCELGDLSFFIKKRDRHGTNAATEDMARKYPVTPGSGLHEVVTRHFLQQLASALKFLREKNYVHRDVKPQNLLLLPSPGFRKENSRPILTASNDSLIPNAGLASLPMLKLADFGFARVLPSTSLADTLCGSPLYMAPEILRYERYDAKADLWSVGTVLYEMITGRPPFRARNHVELLRKIEATEDKVKYPKDAVVSKDLVKLIGKLLTRNPVERMRFEDFFNDPVVVGPIPGVVEDDIPKVEQKPSRDLRSLEADPQREQSELAKSPRERPLRSPQLPSPDEVRVPQANVSARTGQSPGREIGEGLGIRRPPMPQPSTSAPSRPHRLSNASLNRPPIRASASPPTSYLNERKLRPVTERSMTEQDKAAQDVAFERDYVVVEKKHVEVNAFADEMAANPRLTSLSPKNGQMVRRATQQGPPTSTTGAGRMQPSSAVQIAQGKGRPGHDHPCVSLASRSLNTSSAARAPLRPCTTRSPRIRHRHPLLLLDSSVTADRAHHLTKMHGSSSSSKTSHIVVIVYMALPKSSLSNFSLWHLPWITPWVAPLPTKSMRMVLLSRQRWLCLRRLSCFTSRL.

In terms of domain architecture, Protein kinase spans 25-328; sequence FVIGGEIGKG…FEDFFNDPVV (304 aa). Residues 31–39 and lysine 54 contribute to the ATP site; that span reads IGKGSFAQV. Aspartate 168 serves as the catalytic Proton acceptor. Residues 339–374 show a composition bias toward basic and acidic residues; the sequence is DIPKVEQKPSRDLRSLEADPQREQSELAKSPRERPL. 2 disordered regions span residues 339–455 and 501–577; these read DIPK…ERKL and RLTS…TTRS. Composition is skewed to polar residues over residues 390–399, 516–538, and 556–565; these read ANVSARTGQS, ATQQ…SAVQ, and ASRSLNTSSA.

Belongs to the protein kinase superfamily. Ser/Thr protein kinase family. APG1/unc-51/ULK1 subfamily. Homodimer. Forms a ternary complex with ATG13 and ATG17.

The protein localises to the cytoplasm. It is found in the preautophagosomal structure membrane. It carries out the reaction L-seryl-[protein] + ATP = O-phospho-L-seryl-[protein] + ADP + H(+). It catalyses the reaction L-threonyl-[protein] + ATP = O-phospho-L-threonyl-[protein] + ADP + H(+). In terms of biological role, serine/threonine protein kinase involved in the cytoplasm to vacuole transport (Cvt) and found to be essential in autophagy, where it is required for the formation of autophagosomes. Involved in the clearance of protein aggregates which cannot be efficiently cleared by the proteasome. Required for selective autophagic degradation of the nucleus (nucleophagy) as well as for mitophagy which contributes to regulate mitochondrial quantity and quality by eliminating the mitochondria to a basal level to fulfill cellular energy requirements and preventing excess ROS production. Also involved in endoplasmic reticulum-specific autophagic process, in selective removal of ER-associated degradation (ERAD) substrates. Plays a key role in ATG9 and ATG23 cycling through the pre-autophagosomal structure and is necessary to promote ATG18 binding to ATG9 through phosphorylation of ATG9. Catalyzes phosphorylation of ATG4, decreasing the interaction between ATG4 and ATG8 and impairing deconjugation of PE-conjugated forms of ATG8. The polypeptide is Serine/threonine-protein kinase ATG1 (Colletotrichum lindemuthianum (Bean anthracnose fungus)).